Consider the following 112-residue polypeptide: Protein Churchill (112 aa).

Cysteine 2, cysteine 5, cysteine 30, cysteine 33, histidine 59, cysteine 61, cysteine 64, histidine 66, histidine 71, cysteine 88, and cysteine 91 together coordinate Zn(2+).

It belongs to the Churchill family.

Transcriptional activator that mediates FGF signaling during neural development. Plays a role in the regulation of cell movement. Does not bind DNA by itself. The polypeptide is Protein Churchill (churc1) (Xenopus laevis (African clawed frog)).